Consider the following 176-residue polypeptide: Interleukin-1 receptor antagonist protein (176 aa).

Positions 1-25 (METCRCPLSYLISFLLFLSHSETAC) are cleaved as a signal peptide. A disulfide bridge links C91 with C141. An N-linked (GlcNAc...) asparagine glycan is attached at N109.

Belongs to the IL-1 family.

Its subcellular location is the secreted. In terms of biological role, anti-inflammatory antagonist of interleukin-1 family of proinflammatory cytokines such as interleukin-1beta/IL1B and interleukin-1alpha/IL1A. Protects from immune dysregulation and uncontrolled systemic inflammation triggered by IL1 for a range of innate stimulatory agents such as pathogens. The protein is Interleukin-1 receptor antagonist protein (IL1RN) of Canis lupus familiaris (Dog).